Consider the following 399-residue polypeptide: Tryptophan synthase beta chain (399 aa).

K92 is modified (N6-(pyridoxal phosphate)lysine).

It belongs to the TrpB family. As to quaternary structure, tetramer of two alpha and two beta chains. It depends on pyridoxal 5'-phosphate as a cofactor.

It catalyses the reaction (1S,2R)-1-C-(indol-3-yl)glycerol 3-phosphate + L-serine = D-glyceraldehyde 3-phosphate + L-tryptophan + H2O. Its pathway is amino-acid biosynthesis; L-tryptophan biosynthesis; L-tryptophan from chorismate: step 5/5. In terms of biological role, the beta subunit is responsible for the synthesis of L-tryptophan from indole and L-serine. This Bordetella bronchiseptica (strain ATCC BAA-588 / NCTC 13252 / RB50) (Alcaligenes bronchisepticus) protein is Tryptophan synthase beta chain.